We begin with the raw amino-acid sequence, 268 residues long: Octanoyltransferase (268 aa).

The BPL/LPL catalytic domain occupies 49–237 (GTQGDVILVV…ALLKALSGEL (189 aa)). Substrate contacts are provided by residues 87-94 (RGGRITWH), 167-169 (ALG), and 180-182 (GLA). The Acyl-thioester intermediate role is filled by Cys198.

The protein belongs to the LipB family.

It localises to the cytoplasm. It carries out the reaction octanoyl-[ACP] + L-lysyl-[protein] = N(6)-octanoyl-L-lysyl-[protein] + holo-[ACP] + H(+). The protein operates within protein modification; protein lipoylation via endogenous pathway; protein N(6)-(lipoyl)lysine from octanoyl-[acyl-carrier-protein]: step 1/2. Catalyzes the transfer of endogenously produced octanoic acid from octanoyl-acyl-carrier-protein onto the lipoyl domains of lipoate-dependent enzymes. Lipoyl-ACP can also act as a substrate although octanoyl-ACP is likely to be the physiological substrate. The protein is Octanoyltransferase of Corynebacterium aurimucosum (strain ATCC 700975 / DSM 44827 / CIP 107346 / CN-1) (Corynebacterium nigricans).